We begin with the raw amino-acid sequence, 289 residues long: Enoyl-CoA delta isomerase 1, mitochondrial (289 aa).

The N-terminal 28 residues, 1–28, are a transit peptide targeting the mitochondrion; it reads MALAAARRLLLHAGSRLGRREAVDGARR. Lys-48 is modified (N6-acetyllysine; alternate). Lys-48 is modified (N6-succinyllysine; alternate). Lys-71 is subject to N6-succinyllysine. An N6-acetyllysine modification is found at Lys-76. Substrate is bound by residues 93 to 97, Gly-140, and Asn-164; that span reads AGLDL. Lys-222, Lys-229, Lys-255, and Lys-270 each carry N6-acetyllysine; alternate. Residues Lys-222, Lys-229, Lys-255, and Lys-270 each carry the N6-succinyllysine; alternate modification. Lys-275 carries the post-translational modification N6-succinyllysine. Lys-283 is subject to N6-acetyllysine; alternate. Lys-283 is modified (N6-succinyllysine; alternate).

This sequence belongs to the enoyl-CoA hydratase/isomerase family. Homotrimer.

It localises to the mitochondrion matrix. The enzyme catalyses a (3Z)-enoyl-CoA = a 4-saturated (2E)-enoyl-CoA. The catalysed reaction is a (3E)-enoyl-CoA = a 4-saturated (2E)-enoyl-CoA. It catalyses the reaction (3Z)-octenoyl-CoA = (2E)-octenoyl-CoA. It carries out the reaction (2E)-tetradecenoyl-CoA = (3Z)-tetradecenoyl-CoA. The enzyme catalyses (3Z)-dodecenoyl-CoA = (2E)-dodecenoyl-CoA. The catalysed reaction is (3Z)-hexenoyl-CoA = (2E)-hexenoyl-CoA. It catalyses the reaction (3Z)-decenoyl-CoA = (2E)-decenoyl-CoA. It participates in lipid metabolism; fatty acid beta-oxidation. Functionally, key enzyme of fatty acid beta-oxidation. Able to isomerize both 3-cis (3Z) and 3-trans (3E) double bonds into the 2-trans (2E) form in a range of enoyl-CoA species, with a preference for (3Z)-enoyl-CoAs over (3E)-enoyl-CoAs. The catalytic efficiency of this enzyme is not affected by the fatty acyl chain length. The chain is Enoyl-CoA delta isomerase 1, mitochondrial from Mus musculus (Mouse).